The sequence spans 323 residues: MQELRFVLIVVGALAIAALLFHGLWTSKKEGKAKFGNKPLGKLDVDQEDKDTPGQERDFAPDPEDDFEIIRKDRKEPDFGMENSFDNKFSSDPLIDDVLEAKEDKEQREEQEIPAFVATKTDDEQVEPVLQEPAKAFAEKEEAAEVVEETLQPVFEAPLAAQAPEVEVAPVVVDPVVEEPKPEPEMQVIVLNVHCAGDEPFVGTQLFDSMQQNGLIYGEMNIFHRHVDLSGNGKVLFSVANMMQPGTLEHGDPAEFSTKGISFFMTLPCYGEADQNFNLMLRIAQQIADDMGGNVLDDQRNLMTPDRLASYRRQIVEFNAANA.

At 1 to 5 (MQELR) the chain is on the periplasmic side. The chain crosses the membrane as a helical span at residues 6 to 26 (FVLIVVGALAIAALLFHGLWT). Over 27–323 (SKKEGKAKFG…QIVEFNAANA (297 aa)) the chain is Cytoplasmic. A disordered region spans residues 35–92 (FGNKPLGKLDVDQEDKDTPGQERDFAPDPEDDFEIIRKDRKEPDFGMENSFDNKFSSD). 2 stretches are compositionally biased toward basic and acidic residues: residues 41 to 60 (GKLD…RDFA) and 68 to 78 (EIIRKDRKEPD).

This sequence belongs to the ZipA family. In terms of assembly, interacts with FtsZ via their C-terminal domains.

Its subcellular location is the cell inner membrane. Its function is as follows. Essential cell division protein that stabilizes the FtsZ protofilaments by cross-linking them and that serves as a cytoplasmic membrane anchor for the Z ring. Also required for the recruitment to the septal ring of downstream cell division proteins. In Vibrio campbellii (strain ATCC BAA-1116), this protein is Cell division protein ZipA.